The primary structure comprises 347 residues: Selenide, water dikinase (347 aa).

Cys-17 is a catalytic residue. Residues Lys-20 and 48 to 50 (TRD) contribute to the ATP site. Position 51 (Asp-51) interacts with Mg(2+). Residues Asp-68, Asp-91, and 139 to 141 (GHS) contribute to the ATP site. Asp-91 lines the Mg(2+) pocket. Position 227 (Asp-227) interacts with Mg(2+).

This sequence belongs to the selenophosphate synthase 1 family. Class I subfamily. In terms of assembly, homodimer. It depends on Mg(2+) as a cofactor.

It catalyses the reaction hydrogenselenide + ATP + H2O = selenophosphate + AMP + phosphate + 2 H(+). Functionally, synthesizes selenophosphate from selenide and ATP. The sequence is that of Selenide, water dikinase from Salmonella typhi.